The primary structure comprises 479 residues: Sulfate adenylyltransferase subunit 1 (479 aa).

The tr-type G domain maps to Lys25–Arg239. Residues Gly34–Ser41 are G1. Position 34–41 (Gly34–Ser41) interacts with GTP. The G2 stretch occupies residues Gly92–Asp96. The tract at residues Asp113–Gly116 is G3. GTP-binding positions include Asp113–His117 and Asn168–Asp171. Residues Asn168–Asp171 form a G4 region. The segment at Ser206–Leu208 is G5.

The protein belongs to the TRAFAC class translation factor GTPase superfamily. Classic translation factor GTPase family. CysN/NodQ subfamily. As to quaternary structure, heterodimer composed of CysD, the smaller subunit, and CysN.

The catalysed reaction is sulfate + ATP + H(+) = adenosine 5'-phosphosulfate + diphosphate. The protein operates within sulfur metabolism; hydrogen sulfide biosynthesis; sulfite from sulfate: step 1/3. Functionally, with CysD forms the ATP sulfurylase (ATPS) that catalyzes the adenylation of sulfate producing adenosine 5'-phosphosulfate (APS) and diphosphate, the first enzymatic step in sulfur assimilation pathway. APS synthesis involves the formation of a high-energy phosphoric-sulfuric acid anhydride bond driven by GTP hydrolysis by CysN coupled to ATP hydrolysis by CysD. The chain is Sulfate adenylyltransferase subunit 1 from Salmonella dublin (strain CT_02021853).